We begin with the raw amino-acid sequence, 952 residues long: Meiotic coiled-coil protein 3 (952 aa).

Coiled coils occupy residues 283–611 (QLLQ…KEHL), 684–716 (TKKFVQKDQEYQTKEIELRNYKITLQSLLEDKL), and 839–942 (SLEN…RERE).

The protein localises to the cytoplasm. Its function is as follows. Has a role in meiosis. The protein is Meiotic coiled-coil protein 3 (mcp3) of Schizosaccharomyces pombe (strain 972 / ATCC 24843) (Fission yeast).